Here is a 154-residue protein sequence, read N- to C-terminus: Endoribonuclease YbeY (154 aa).

The Zn(2+) site is built by His118, His122, and His128.

This sequence belongs to the endoribonuclease YbeY family. Zn(2+) serves as cofactor.

The protein resides in the cytoplasm. Single strand-specific metallo-endoribonuclease involved in late-stage 70S ribosome quality control and in maturation of the 3' terminus of the 16S rRNA. The chain is Endoribonuclease YbeY from Macrococcus caseolyticus (strain JCSC5402) (Macrococcoides caseolyticum).